The chain runs to 74 residues: DNA gyrase inhibitor YacG (74 aa).

Zn(2+) contacts are provided by Cys-7, Cys-10, Cys-26, and Cys-30.

This sequence belongs to the DNA gyrase inhibitor YacG family. As to quaternary structure, interacts with GyrB. Zn(2+) is required as a cofactor.

Inhibits all the catalytic activities of DNA gyrase by preventing its interaction with DNA. Acts by binding directly to the C-terminal domain of GyrB, which probably disrupts DNA binding by the gyrase. This Shewanella denitrificans (strain OS217 / ATCC BAA-1090 / DSM 15013) protein is DNA gyrase inhibitor YacG.